The chain runs to 120 residues: Large ribosomal subunit protein uL22 (120 aa).

Belongs to the universal ribosomal protein uL22 family. As to quaternary structure, part of the 50S ribosomal subunit.

In terms of biological role, this protein binds specifically to 23S rRNA; its binding is stimulated by other ribosomal proteins, e.g. L4, L17, and L20. It is important during the early stages of 50S assembly. It makes multiple contacts with different domains of the 23S rRNA in the assembled 50S subunit and ribosome. Functionally, the globular domain of the protein is located near the polypeptide exit tunnel on the outside of the subunit, while an extended beta-hairpin is found that lines the wall of the exit tunnel in the center of the 70S ribosome. This chain is Large ribosomal subunit protein uL22, found in Borreliella afzelii (strain PKo) (Borrelia afzelii).